The primary structure comprises 69 residues: uncharacterized protein (69 aa).

Residues 23 to 46 (AENEGNRKENRRQMQSRNERGCNV) are disordered. A compositionally biased stretch (basic and acidic residues) spans 26–44 (EGNRKENRRQMQSRNERGC).

This is an uncharacterized protein from Homo sapiens (Human).